Here is a 308-residue protein sequence, read N- to C-terminus: Cytochrome c biogenesis protein CcsA (308 aa).

Transmembrane regions (helical) follow at residues 2–22 (IVST…SILI), 44–64 (GMLI…IYLG), 71–91 (LSES…IGYF), 143–163 (MILG…LMVI), 212–232 (VISL…VWAN), 247–267 (WAFI…NINL), and 273–293 (AIVA…VNLV).

This sequence belongs to the CcmF/CycK/Ccl1/NrfE/CcsA family. As to quaternary structure, may interact with Ccs1.

The protein localises to the plastid membrane. Functionally, required during biogenesis of c-type cytochromes (cytochrome c6 and cytochrome f) at the step of heme attachment. This is Cytochrome c biogenesis protein CcsA from Cuscuta reflexa (Southern Asian dodder).